The primary structure comprises 102 residues: Small ribosomal subunit protein eS24 (102 aa).

This sequence belongs to the eukaryotic ribosomal protein eS24 family.

The sequence is that of Small ribosomal subunit protein eS24 from Methanococcus maripaludis (strain C7 / ATCC BAA-1331).